A 471-amino-acid polypeptide reads, in one-letter code: ATP synthase subunit beta (471 aa).

152 to 159 contributes to the ATP binding site; that stretch reads GGAGVGKT.

This sequence belongs to the ATPase alpha/beta chains family. As to quaternary structure, F-type ATPases have 2 components, CF(1) - the catalytic core - and CF(0) - the membrane proton channel. CF(1) has five subunits: alpha(3), beta(3), gamma(1), delta(1), epsilon(1). CF(0) has three main subunits: a(1), b(2) and c(9-12). The alpha and beta chains form an alternating ring which encloses part of the gamma chain. CF(1) is attached to CF(0) by a central stalk formed by the gamma and epsilon chains, while a peripheral stalk is formed by the delta and b chains.

It localises to the cell membrane. The enzyme catalyses ATP + H2O + 4 H(+)(in) = ADP + phosphate + 5 H(+)(out). Produces ATP from ADP in the presence of a proton gradient across the membrane. The catalytic sites are hosted primarily by the beta subunits. In Herpetosiphon aurantiacus (Herpetosiphon giganteus), this protein is ATP synthase subunit beta.